Consider the following 186-residue polypeptide: Acetyltransferase PA5475 (186 aa).

The 156-residue stretch at 31–186 (VLIRPLREED…STQVIHRLAL (156 aa)) folds into the N-acetyltransferase domain. CoA contacts are provided by residues 117–119 (VTI), Gly125, Asn156, and 161–163 (DLC).

Functionally, catalyzes the transfer of an acetyl group from acetyl coenzyme A (AcCoA) to an acceptor substrate and releases both CoA and the acetylated product. It prefers the antibiotic chloramphenicol. In Pseudomonas aeruginosa (strain ATCC 15692 / DSM 22644 / CIP 104116 / JCM 14847 / LMG 12228 / 1C / PRS 101 / PAO1), this protein is Acetyltransferase PA5475.